The following is a 795-amino-acid chain: Protein ROOT HAIR DEFECTIVE 3 homolog 1 (795 aa).

Residues 1–682 lie on the Cytoplasmic side of the membrane; the sequence is MDADKSEGCC…EANRRGNNWL (682 aa). Positions 39 to 254 constitute a GB1/RHD3-type G domain; that stretch reads GLSYAVVSIM…IAPGGLAGDR (216 aa). Residue 49-56 participates in GTP binding; that stretch reads GPQSSGKS. Residues 218-244 are a coiled coil; it reads VALSSYEEKEEQFKEQIASLRQRFMHS. The chain crosses the membrane as a helical span at residues 683 to 703; that stretch reads PPPWAILALIVLGFNEFMTLL. The Lumenal portion of the chain corresponds to 704–706; sequence RNP. Residues 707–727 form a helical membrane-spanning segment; it reads LYLGVMFVAFLLAKALWTQLD. Topologically, residues 728–795 are cytoplasmic; the sequence is IPGEFRNGAL…PDHKSSSKED (68 aa). Residues 761-795 are disordered; that stretch reads QGEDPPAANPENRRSSNNTSSSENPPDHKSSSKED. Residues 775–784 are compositionally biased toward low complexity; that stretch reads SSNNTSSSEN. A compositionally biased stretch (basic and acidic residues) spans 785–795; the sequence is PPDHKSSSKED.

This sequence belongs to the TRAFAC class dynamin-like GTPase superfamily. GB1/RHD3 GTPase family. RHD3 subfamily. In terms of tissue distribution, specifically expressed in flowers.

Its subcellular location is the endoplasmic reticulum membrane. In terms of biological role, probable GTP-binding protein that may be involved in cell development. The chain is Protein ROOT HAIR DEFECTIVE 3 homolog 1 from Arabidopsis thaliana (Mouse-ear cress).